The following is a 343-amino-acid chain: Inositol 2-dehydrogenase 1 (343 aa).

It belongs to the Gfo/Idh/MocA family. Homotetramer.

It carries out the reaction myo-inositol + NAD(+) = scyllo-inosose + NADH + H(+). Functionally, involved in the oxidation of myo-inositol (MI) to 2-keto-myo-inositol (2KMI or 2-inosose). The protein is Inositol 2-dehydrogenase 1 of Mycolicibacterium vanbaalenii (strain DSM 7251 / JCM 13017 / BCRC 16820 / KCTC 9966 / NRRL B-24157 / PYR-1) (Mycobacterium vanbaalenii).